We begin with the raw amino-acid sequence, 342 residues long: Putative glycosyltransferases (342 aa).

Helical transmembrane passes span 227–247 and 262–282; these read IFYL…YLII and VIVS…LVGI.

Belongs to the glycosyltransferase 2 family.

Its subcellular location is the cell membrane. Its function is as follows. May play only a redundant role in maintaining cell wall viability and bacterial virulence. The protein is Putative glycosyltransferases (pimF) of Mycobacterium tuberculosis (strain CDC 1551 / Oshkosh).